A 501-amino-acid chain; its full sequence is Lysine--tRNA ligase (501 aa).

Glu411 and Glu418 together coordinate Mg(2+).

It belongs to the class-II aminoacyl-tRNA synthetase family. In terms of assembly, homodimer. Mg(2+) is required as a cofactor.

The protein resides in the cytoplasm. It catalyses the reaction tRNA(Lys) + L-lysine + ATP = L-lysyl-tRNA(Lys) + AMP + diphosphate. The protein is Lysine--tRNA ligase of Clostridium perfringens (strain ATCC 13124 / DSM 756 / JCM 1290 / NCIMB 6125 / NCTC 8237 / Type A).